The primary structure comprises 601 residues: Glutamyl-tRNA(Gln) amidotransferase subunit B, mitochondrial (601 aa).

The transit peptide at 1-52 (MLQQWLRQSPRAARVLRGSCCRGPQSGSLRHSPLPTAPHRCIRSLQTSATES) directs the protein to the mitochondrion.

The protein belongs to the GatB/GatE family. GatB subfamily. As to quaternary structure, subunit of the heterotrimeric GatCAB amidotransferase (AdT) complex, composed of A, B and C subunits.

It is found in the mitochondrion. The catalysed reaction is L-glutamyl-tRNA(Gln) + L-glutamine + ATP + H2O = L-glutaminyl-tRNA(Gln) + L-glutamate + ADP + phosphate + H(+). Its function is as follows. Allows the formation of correctly charged Gln-tRNA(Gln) through the transamidation of misacylated Glu-tRNA(Gln) in the mitochondria. The reaction takes place in the presence of glutamine and ATP through an activated gamma-phospho-Glu-tRNA(Gln). The protein is Glutamyl-tRNA(Gln) amidotransferase subunit B, mitochondrial of Aspergillus fumigatus (strain ATCC MYA-4609 / CBS 101355 / FGSC A1100 / Af293) (Neosartorya fumigata).